Consider the following 341-residue polypeptide: Methionine import ATP-binding protein MetN 3 (341 aa).

The region spanning Ile2–Val241 is the ABC transporter domain. Position 38-45 (Gly38–Ser45) interacts with ATP.

It belongs to the ABC transporter superfamily. Methionine importer (TC 3.A.1.24) family. The complex is composed of two ATP-binding proteins (MetN), two transmembrane proteins (MetI) and a solute-binding protein (MetQ).

Its subcellular location is the cell membrane. The enzyme catalyses L-methionine(out) + ATP + H2O = L-methionine(in) + ADP + phosphate + H(+). It catalyses the reaction D-methionine(out) + ATP + H2O = D-methionine(in) + ADP + phosphate + H(+). Part of the ABC transporter complex MetNIQ involved in methionine import. Responsible for energy coupling to the transport system. The chain is Methionine import ATP-binding protein MetN 3 from Bacillus cereus (strain ATCC 14579 / DSM 31 / CCUG 7414 / JCM 2152 / NBRC 15305 / NCIMB 9373 / NCTC 2599 / NRRL B-3711).